Here is an 861-residue protein sequence, read N- to C-terminus: ToMV resistance protein Tm-2(2) (861 aa).

Residues 63-83 (VKNLLKDIQELAGDVEDLLDD) adopt a coiled-coil conformation. Positions 162 to 388 (DDFNMLQAKL…LESMGHKVQD (227 aa)) constitute an NB-ARC domain. 185–192 (GMPGLGKT) contributes to the ATP binding site. LRR repeat units lie at residues 225–248 (LDIA…NLRS), 305–327 (LHAL…IFNF), 388–411 (DGCA…CFLY), 449–472 (LAED…TYNG), 510–536 (VARL…KLEK), 585–608 (MTCL…IVKL), 609–631 (TRLE…VWES), 652–680 (ISSF…FFEP), 689–710 (LRKL…IFSP), 712–735 (LKAL…LSSY), 736–758 (PHIA…SFPP), 784–810 (LRKL…GYSF), and 811–835 (PQLE…DVSM).

This sequence belongs to the disease resistance NB-LRR family. In terms of assembly, (Microbial infection) Interacts with tobamoviruses mouvement protein (e.g. tobacco mosaic virus (TMV) MP, AC P03583) at the plasma membrane; this interaction triggers defense responses leading to programmed cell death. Binds to HSP90 proteins (e.g. HSP90-1 and Nicotiana benthamiana HSP90-1); this interaction seems required for defense responses toward tobamoviruses.

Its subcellular location is the cell membrane. Its function is as follows. Inhibitor of viral mouvements which confers resistance to some tobamoviruses including tomato mosaic virus (ToMV) (e.g. strains L, B7 and ToMV1-2) and tobacco mosaic virus (TMV), but not to resistance-breaking isolates (e.g. LIIA and ToMV2(2)) ToMV and tomato brown rugose fruit virus (ToBRFV). Elicits a hypersensitive reaction in response to avirulent (Avr) movement proteins from resistance inducing tobamoviruses (e.g. ToMV and TMV) strains, thus leading to programmed cell death; this local extreme resistance requires rbcS. The protein is ToMV resistance protein Tm-2(2) of Solanum lycopersicum (Tomato).